Reading from the N-terminus, the 1140-residue chain is Kinesin-like protein KIN-14O (1140 aa).

Over residues 1–12 (MLESEFQREHAF) the composition is skewed to basic and acidic residues. Disordered regions lie at residues 1–37 (MLES…ADDD), 50–81 (NPAE…DEDS), 161–217 (SPGS…GGHK), and 323–347 (ASGT…KEED). Over residues 161–179 (SPGSSHGGSTPRSPFSPSS) the composition is skewed to low complexity. Basic and acidic residues predominate over residues 180–193 (PRERHNKGLADSRF). The segment covering 197-209 (LPNSSALDPSSPG) has biased composition (polar residues). Residues 327–546 (SEENETEKSK…KAKEMEEKSE (220 aa)) are a coiled coil. The span at 332–347 (TEKSKLEEKKKDKEED) shows a compositional bias: basic and acidic residues. The region spanning 632–952 (NIRVYCRVRP…LKFAERVSGV (321 aa)) is the Kinesin motor domain. Position 716–723 (716–723 (GQTGSGKT)) interacts with ATP. The span at 1002–1018 (LGQSDDFNSEAGDSQLS) shows a compositional bias: polar residues. Disordered regions lie at residues 1002–1021 (LGQS…SIED) and 1028–1140 (DYTR…KRWS). Basic and acidic residues predominate over residues 1066–1078 (EGRKPLKISDKPK). Residues 1099-1130 (TMRTTNIAKATSALLSPSSQGMKKTGSASNFL) show a composition bias toward polar residues.

This sequence belongs to the TRAFAC class myosin-kinesin ATPase superfamily. Kinesin family. KIN-14 subfamily.

The chain is Kinesin-like protein KIN-14O from Arabidopsis thaliana (Mouse-ear cress).